A 466-amino-acid polypeptide reads, in one-letter code: Vimentin (466 aa).

Low complexity-rich tracts occupy residues 1 to 13 (MSTR…SYRR) and 20 to 31 (TASRPSSSRSYV). Residues 1–31 (MSTRTVSSSSYRRMFGGPGTASRPSSSRSYV) are disordered. S2 carries the N-acetylserine modification. The head stretch occupies residues 2–95 (STRTVSSSSY…FSLADAINTE (94 aa)). S7 carries the phosphoserine; alternate modification. S7 is a glycosylation site (O-linked (GlcNAc) serine; alternate). 3 positions are modified to phosphoserine: S8, S9, and S10. A Phosphothreonine modification is found at T20. Residues S25 and S26 each carry the phosphoserine modification. A glycan (O-linked (GlcNAc) threonine) is linked at T33. S34 carries an O-linked (GlcNAc) serine; alternate glycan. A Phosphoserine; by PKC; alternate modification is found at S34. S39 is subject to Phosphoserine; by CaMK2, PKA, PKC and ROCK2. Residues S42, S47, S49, and S51 each carry the phosphoserine modification. Y53 carries the phosphotyrosine modification. S55 is modified (phosphoserine). S56 carries the phosphoserine; by CDK5 and CDK1 modification. The residue at position 61 (Y61) is a Phosphotyrosine. S66 carries the post-translational modification Phosphoserine. The residue at position 72 (S72) is a Phosphoserine; by AURKB and ROCK2. Residues S73 and S87 each carry the phosphoserine modification. Positions 96–131 (FKNTRTNEKVELQELNDRFANYIDKVRFLEQQNKIL) are coil 1A. Residues 96–131 (FKNTRTNEKVELQELNDRFANYIDKVRFLEQQNKIL) adopt a coiled-coil conformation. Positions 103–411 (EKVELQELND…KLLEGEESRI (309 aa)) constitute an IF rod domain. K104 is covalently cross-linked (Glycyl lysine isopeptide (Lys-Gly) (interchain with G-Cter in SUMO2)). Y117 is subject to Phosphotyrosine. 3 positions are modified to N6-acetyllysine; alternate: K120, K129, and K139. An N6-succinyllysine; alternate mark is found at K120 and K129. Glycyl lysine isopeptide (Lys-Gly) (interchain with G-Cter in SUMO2); alternate cross-links involve residues K120, K129, and K139. Positions 132–153 (LAELEQLKGQGKSRLGDLYEEE) are linker 1. S144 bears the Phosphoserine mark. Positions 154-245 (MRELRRQVDQ…KLHDEEIQEL (92 aa)) form a coiled coil. Positions 154–245 (MRELRRQVDQ…KLHDEEIQEL (92 aa)) are coil 1B. Residue K168 is modified to N6-acetyllysine. K188 carries the post-translational modification N6-acetyllysine; alternate. N6-succinyllysine; alternate is present on K188. At S214 the chain carries Phosphoserine. At K223 the chain carries N6-acetyllysine; alternate. K223 is covalently cross-linked (Glycyl lysine isopeptide (Lys-Gly) (interchain with G-Cter in SUMO2); alternate). At S226 the chain carries Phosphoserine. An N6-acetyllysine modification is found at K235. Residues 246 to 268 (QAQIQEQHVQIDMDVSKPDLTAA) are linker 12. K262 is covalently cross-linked (Glycyl lysine isopeptide (Lys-Gly) (interchain with G-Cter in SUMO2)). Positions 269-407 (LRDVRQQYES…ATYRKLLEGE (139 aa)) are coil 2. At K294 the chain carries N6-acetyllysine; alternate. K294 bears the N6-succinyllysine; alternate mark. K294 is covalently cross-linked (Glycyl lysine isopeptide (Lys-Gly) (interchain with G-Cter in SUMO2); alternate). A Phosphoserine modification is found at S299. Residues 303–407 (NRNNDALRQA…ATYRKLLEGE (105 aa)) adopt a coiled-coil conformation. K313 is covalently cross-linked (Glycyl lysine isopeptide (Lys-Gly) (interchain with G-Cter in SUMO2)). Residue S325 is modified to Phosphoserine. The short motif at 326-329 (LTCE) is the [IL]-x-C-x-x-[DE] motif element. K373 bears the N6-acetyllysine; alternate mark. K373 is covalently cross-linked (Glycyl lysine isopeptide (Lys-Gly) (interchain with G-Cter in SUMO2); alternate). A tail region spans residues 408–466 (ESRISLPLPNFSSLNLRETNLESLPLVDTHSKRTLLIKTVETRDGQVINETSQHHDDLE). A phosphoserine mark is found at S409, S412, S419, and S420. A Phosphothreonine modification is found at T426. Phosphoserine is present on S430. At T436 the chain carries Phosphothreonine. Position 438 is a phosphoserine (S438). K439 participates in a covalent cross-link: Glycyl lysine isopeptide (Lys-Gly) (interchain with G-Cter in SUMO2). Residue K445 is modified to N6-acetyllysine; alternate. The residue at position 445 (K445) is an N6-succinyllysine; alternate. Residue K445 forms a Glycyl lysine isopeptide (Lys-Gly) (interchain with G-Cter in SUMO2); alternate linkage. A Glycyl lysine isopeptide (Lys-Gly) (interchain with G-Cter in SUMO1); alternate cross-link involves residue K445. T446 and T458 each carry phosphothreonine. A Phosphoserine modification is found at S459.

Belongs to the intermediate filament family. In terms of assembly, homomer assembled from elementary dimers. Identified in complexes that contain VIM, EZR, AHNAK, BFSP1, BFSP2, ANK2, PLEC, PRX and spectrin. Interacts with BCAS3. Interacts with LGSN. Interacts with SYNM. Interacts (via rod region) with PLEC (via CH 1 domain). Interacts with STK33. Interacts with LARP6. Interacts with RAB8B. Interacts with TOR1A; the interaction associates TOR1A with the cytoskeleton. Interacts with TOR1AIP1. Interacts with TOR1AIP1. Interacts with DIAPH1. Interacts with EPPK1; interaction is dependent of higher-order structure of intermediate filament. Interacts with the non-receptor tyrosine kinase SRMS; the interaction leads to phosphorylation of VIM. Interacts with NOD2. Interacts (via head region) with CORO1C. Interacts with HDGF. Interacts with PRKCE (via phorbol-ester/DAG-type 2 domain). Interacts with BFSP2. Interacts with PPL. Interacts with PKP1 and PKP2. Interacts with SCRIB (via PDZ domains); the interaction protects SCRIB from proteasomal degradation and facilitates SCRIB localization to intermediate filaments, the interaction is reduced by cell contact inhibition. In terms of processing, one of the most prominent phosphoproteins in various cells of mesenchymal origin. Phosphorylation is enhanced during cell division, at which time vimentin filaments are significantly reorganized. Phosphorylation by PKN1 inhibits the formation of filaments. Filament disassembly during mitosis is promoted by phosphorylation at Ser-55 as well as by nestin. Phosphorylated at Ser-56 by CDK5 during neutrophil secretion in the cytoplasm. Phosphorylated by STK33. Phosphorylated on tyrosine residues by SRMS. Post-translationally, S-nitrosylation is induced by interferon-gamma and oxidatively-modified low-densitity lipoprotein (LDL(ox)) possibly implicating the iNOS-S100A8/9 transnitrosylase complex.

Its subcellular location is the cytoplasm. The protein resides in the cytoskeleton. It is found in the nucleus matrix. The protein localises to the cell membrane. Its function is as follows. Vimentins are class-III intermediate filaments found in various non-epithelial cells, especially mesenchymal cells. Vimentin is attached to the nucleus, endoplasmic reticulum, and mitochondria, either laterally or terminally. Plays a role in cell directional movement, orientation, cell sheet organization and Golgi complex polarization at the cell migration front. Protects SCRIB from proteasomal degradation and facilitates its localization to intermediate filaments in a cell contact-mediated manner. In terms of biological role, involved with LARP6 in the stabilization of type I collagen mRNAs for CO1A1 and CO1A2. In Sus scrofa (Pig), this protein is Vimentin (VIM).